The primary structure comprises 472 residues: RNA pseudouridine synthase 6, chloroplastic (472 aa).

The N-terminal 66 residues, 1 to 66 (MASPALTGGY…TDSQNQTTLS (66 aa)), are a transit peptide targeting the chloroplast. The S4 RNA-binding domain maps to 101–208 (VLVSEFISKQ…SPRCYEIDWK (108 aa)). Aspartate 261 is an active-site residue.

Belongs to the pseudouridine synthase RluA family.

The protein resides in the plastid. The protein localises to the chloroplast. It carries out the reaction a uridine in RNA = a pseudouridine in RNA. The sequence is that of RNA pseudouridine synthase 6, chloroplastic from Arabidopsis thaliana (Mouse-ear cress).